Reading from the N-terminus, the 196-residue chain is UMP-CMP kinase (196 aa).

13–18 (GAGKGT) is a binding site for ATP. Serine 33 carries the post-translational modification Phosphoserine. Residues 33–63 (SAGELLRDERKNPDSQYGELIEKYIKEGKIV) are NMP. Position 39 (arginine 39) interacts with a ribonucleoside 5'-phosphate. Residues lysine 43 and lysine 55 each carry the N6-acetyllysine modification. 61 to 63 (KIV) serves as a coordination point for a ribonucleoside 5'-phosphate. Lysine 73 is covalently cross-linked (Glycyl lysine isopeptide (Lys-Gly) (interchain with G-Cter in SUMO2)). 93 to 96 (GFPR) serves as a coordination point for a ribonucleoside 5'-phosphate. Residue asparagine 100 participates in CMP binding. N6-succinyllysine is present on lysine 106. The segment at 133 to 143 (ERGKSSGRSDD) is LID. Arginine 134 serves as a coordination point for ATP. A ribonucleoside 5'-phosphate contacts are provided by arginine 140 and arginine 151. Position 179 (lysine 179) interacts with ATP. The residue at position 180 (serine 180) is a Phosphoserine.

Belongs to the adenylate kinase family. UMP-CMP kinase subfamily. Monomer. Mg(2+) serves as cofactor.

The protein localises to the nucleus. Its subcellular location is the cytoplasm. It carries out the reaction CMP + ATP = CDP + ADP. The enzyme catalyses dCMP + ATP = dCDP + ADP. The catalysed reaction is UMP + ATP = UDP + ADP. It catalyses the reaction a 2'-deoxyribonucleoside 5'-diphosphate + ATP = a 2'-deoxyribonucleoside 5'-triphosphate + ADP. It carries out the reaction a ribonucleoside 5'-diphosphate + ATP = a ribonucleoside 5'-triphosphate + ADP. Functionally, catalyzes the phosphorylation of pyrimidine nucleoside monophosphates at the expense of ATP. Plays an important role in de novo pyrimidine nucleotide biosynthesis. Has preference for UMP and CMP as phosphate acceptors. Also displays broad nucleoside diphosphate kinase activity. The polypeptide is UMP-CMP kinase (Cmpk1) (Rattus norvegicus (Rat)).